A 594-amino-acid polypeptide reads, in one-letter code: Arginine--tRNA ligase (594 aa).

The 'HIGH' region signature appears at 139–149 (ANPTGPLHVGH).

This sequence belongs to the class-I aminoacyl-tRNA synthetase family. Monomer.

It is found in the cytoplasm. It catalyses the reaction tRNA(Arg) + L-arginine + ATP = L-arginyl-tRNA(Arg) + AMP + diphosphate. The protein is Arginine--tRNA ligase of Paraburkholderia phymatum (strain DSM 17167 / CIP 108236 / LMG 21445 / STM815) (Burkholderia phymatum).